Consider the following 314-residue polypeptide: tRNA dimethylallyltransferase (314 aa).

13–20 (GPTAVGKT) serves as a coordination point for ATP. Position 15–20 (15–20 (TAVGKT)) interacts with substrate. The segment at 38–41 (DSMQ) is interaction with substrate tRNA.

This sequence belongs to the IPP transferase family. In terms of assembly, monomer. Mg(2+) is required as a cofactor.

It catalyses the reaction adenosine(37) in tRNA + dimethylallyl diphosphate = N(6)-dimethylallyladenosine(37) in tRNA + diphosphate. In terms of biological role, catalyzes the transfer of a dimethylallyl group onto the adenine at position 37 in tRNAs that read codons beginning with uridine, leading to the formation of N6-(dimethylallyl)adenosine (i(6)A). This is tRNA dimethylallyltransferase from Bacillus velezensis (strain DSM 23117 / BGSC 10A6 / LMG 26770 / FZB42) (Bacillus amyloliquefaciens subsp. plantarum).